A 145-amino-acid polypeptide reads, in one-letter code: Globin-1 (145 aa).

The 145-residue stretch at 1–145 (GISADQAKAL…VIVPGMKAGY (145 aa)) folds into the Globin domain. Heme b contacts are provided by His63 and His92.

This sequence belongs to the globin family. Monomer.

The polypeptide is Globin-1 (Liolophura japonica (Chiton)).